Consider the following 242-residue polypeptide: Probable transcriptional regulatory protein Bmul_0984/BMULJ_02280 (242 aa).

The protein belongs to the TACO1 family.

It localises to the cytoplasm. This is Probable transcriptional regulatory protein Bmul_0984/BMULJ_02280 from Burkholderia multivorans (strain ATCC 17616 / 249).